We begin with the raw amino-acid sequence, 478 residues long: Proline--tRNA ligase (478 aa).

Belongs to the class-II aminoacyl-tRNA synthetase family. ProS type 3 subfamily. As to quaternary structure, homodimer.

It is found in the cytoplasm. The enzyme catalyses tRNA(Pro) + L-proline + ATP = L-prolyl-tRNA(Pro) + AMP + diphosphate. In terms of biological role, catalyzes the attachment of proline to tRNA(Pro) in a two-step reaction: proline is first activated by ATP to form Pro-AMP and then transferred to the acceptor end of tRNA(Pro). This Clostridium novyi (strain NT) protein is Proline--tRNA ligase.